The sequence spans 531 residues: Transporter mfs1 (531 aa).

Helical transmembrane passes span 83–103 (LVVTFDVCFLTFAVYMGSAIF), 119–139 (VPVILGLTLFVEGYAVGPLIF), 158–178 (LIVFICLQIPTALGSSLGVLL), 182–202 (FLAGVFGSPALSTGGASLADI), 214–234 (FWSLGAVGGPVLGPLLGAAMV), 241–261 (WQFWLLMMISALVLVIITFFM), 325–345 (IYIGLVYSILYLWFEAFPILF), 358–378 (LVYMGILVGSVLTVAFYFIYL), 398–418 (ILIISFPAAFFIPISLFWFGW), and 424–444 (VHWIVPIVGTLFYASGSFLLF). A glycan (N-linked (GlcNAc...) asparagine) is linked at Asn486. A helical membrane pass occupies residues 496 to 516 (GWGSTILGVISCIMIPIPFLI).

Belongs to the major facilitator superfamily. CAR1 family.

Its subcellular location is the endoplasmic reticulum. It localises to the membrane. This chain is Transporter mfs1 (mfs1), found in Schizosaccharomyces pombe (strain 972 / ATCC 24843) (Fission yeast).